Reading from the N-terminus, the 290-residue chain is Probable adenylate kinase 2, chloroplastic (290 aa).

Positions Met1–Thr10 are enriched in low complexity. Positions Met1–Arg37 are disordered. The N-terminal 61 residues, Met1–Arg61, are a transit peptide targeting the chloroplast. Position 83-88 (Ala83–Thr88) interacts with ATP. The interval Ser103–Val132 is NMP. AMP contacts are provided by residues Arg109, Gln130–Val132, Gly159–Arg162, and Gln166. ATP is bound by residues Arg193, Arg197, and Ile206 to Tyr207. The LID stretch occupies residues Gly196–Asp229. AMP contacts are provided by Arg226 and Arg237.

It belongs to the adenylate kinase family.

Its subcellular location is the plastid. The protein resides in the chloroplast. It carries out the reaction AMP + ATP = 2 ADP. In terms of biological role, catalyzes the reversible transfer of the terminal phosphate group between ATP and AMP. Plays an important role in cellular energy homeostasis and in adenine nucleotide metabolism. This Oryza sativa subsp. japonica (Rice) protein is Probable adenylate kinase 2, chloroplastic.